We begin with the raw amino-acid sequence, 377 residues long: Cytochrome c peroxidase, mitochondrial (377 aa).

Residues 1-32 (MSFRAPNLIRSTVGRRAGQTLNLRSQVIRRRF) constitute a mitochondrion transit peptide. His-138 functions as the Proton acceptor in the catalytic mechanism. A heme b-binding site is contributed by His-261. The active-site Tryptophan radical intermediate is the Trp-277.

It belongs to the peroxidase family. Cytochrome c peroxidase subfamily. In terms of assembly, forms a one-to-one complex with cytochrome c. Interacts with MID1 (via C-terminus); the interaction may contribute to cellular detoxification of radicals. Requires heme b as cofactor.

The protein resides in the mitochondrion matrix. Its subcellular location is the mitochondrion intermembrane space. It catalyses the reaction 2 Fe(II)-[cytochrome c] + H2O2 + 2 H(+) = 2 Fe(III)-[cytochrome c] + 2 H2O. Functionally, destroys radicals which are normally produced within the cells and which are toxic to biological systems. This chain is Cytochrome c peroxidase, mitochondrial (CCP1), found in Cryptococcus neoformans var. grubii serotype A (strain H99 / ATCC 208821 / CBS 10515 / FGSC 9487) (Filobasidiella neoformans var. grubii).